The chain runs to 501 residues: Aldehyde dehydrogenase 1A1 (501 aa).

S2 bears the N-acetylserine mark. 2 positions are modified to N6-acetyllysine: K91 and K128. NAD(+)-binding positions include 167–170, 193–196, 226–227, and 246–247; these read IPWN, KPAE, GP, and GS. An N6-acetyllysine modification is found at K252. E269 acts as the Proton acceptor in catalysis. 269–271 lines the NAD(+) pocket; the sequence is ELG. Catalysis depends on C303, which acts as the Nucleophile. Residues 336 to 501 form a mediates interaction with PRMT3 region; the sequence is LTPGINQGPQ…VAMKISQKNS (166 aa). Residue T337 is modified to Phosphothreonine. NAD(+) is bound at residue 349–353; that stretch reads EQHDK. 2 positions are modified to N6-acetyllysine: K353 and K367. 400 to 402 is an NAD(+) binding site; that stretch reads EIF. Residue K410 is modified to N6-acetyllysine. S413 carries the phosphoserine modification. Residues K419, K435, and K495 each carry the N6-acetyllysine modification.

It belongs to the aldehyde dehydrogenase family. In terms of assembly, homotetramer. Interacts with PRMT3; the interaction is direct, inhibits ALDH1A1 aldehyde dehydrogenase activity and is independent of the methyltransferase activity of PRMT3. The N-terminus is blocked most probably by acetylation. Expressed in retina. Expressed in lens and cornea (at protein level). Expressed by midbrain dopamine neurons.

It localises to the cytoplasm. The protein localises to the cytosol. The protein resides in the cell projection. Its subcellular location is the axon. It carries out the reaction an aldehyde + NAD(+) + H2O = a carboxylate + NADH + 2 H(+). The enzyme catalyses all-trans-retinal + NAD(+) + H2O = all-trans-retinoate + NADH + 2 H(+). The catalysed reaction is 9-cis-retinal + NAD(+) + H2O = 9-cis-retinoate + NADH + 2 H(+). It catalyses the reaction 11-cis-retinal + NAD(+) + H2O = 11-cis-retinoate + NADH + 2 H(+). It carries out the reaction 13-cis-retinal + NAD(+) + H2O = 13-cis-retinoate + NADH + 2 H(+). The enzyme catalyses 4-aminobutanal + NAD(+) + H2O = 4-aminobutanoate + NADH + 2 H(+). The catalysed reaction is 3-deoxyglucosone + NAD(+) + H2O = 2-dehydro-3-deoxy-D-gluconate + NADH + 2 H(+). It catalyses the reaction (E)-4-hydroxynon-2-enal + NAD(+) + H2O = (E)-4-hydroxynon-2-enoate + NADH + 2 H(+). It carries out the reaction malonaldehyde + NAD(+) + H2O = 3-oxopropanoate + NADH + 2 H(+). The enzyme catalyses hexanal + NAD(+) + H2O = hexanoate + NADH + 2 H(+). The catalysed reaction is propanal + NAD(+) + H2O = propanoate + NADH + 2 H(+). It catalyses the reaction acetaldehyde + NAD(+) + H2O = acetate + NADH + 2 H(+). It carries out the reaction benzaldehyde + NAD(+) + H2O = benzoate + NADH + 2 H(+). It functions in the pathway cofactor metabolism; retinol metabolism. With respect to regulation, the aminobutyraldehyde dehydrogenase activity is negatively regulated by ethanol in vivo. Functionally, cytosolic dehydrogenase that catalyzes the irreversible oxidation of a wide range of aldehydes to their corresponding carboxylic acid. Functions downstream of retinol dehydrogenases and catalyzes the oxidation of retinaldehyde into retinoic acid, the second step in the oxidation of retinol/vitamin A into retinoic acid. This pathway is crucial to control the levels of retinol and retinoic acid, two important molecules which excess can be teratogenic and cytotoxic. Also oxidizes aldehydes resulting from lipid peroxidation like (E)-4-hydroxynon-2-enal/HNE, malonaldehyde and hexanal that form protein adducts and are highly cytotoxic. By participating for instance to the clearance of (E)-4-hydroxynon-2-enal/HNE in the lens epithelium prevents the formation of HNE-protein adducts and lens opacification. Also functions downstream of fructosamine-3-kinase in the fructosamine degradation pathway by catalyzing the oxidation of 3-deoxyglucosone, the carbohydrate product of fructosamine 3-phosphate decomposition, which is itself a potent glycating agent that may react with lysine and arginine side-chains of proteins. Also has an aminobutyraldehyde dehydrogenase activity and is probably part of an alternative pathway for the biosynthesis of GABA/4-aminobutanoate in midbrain, thereby playing a role in GABAergic synaptic transmission. The polypeptide is Aldehyde dehydrogenase 1A1 (Mus musculus (Mouse)).